Reading from the N-terminus, the 137-residue chain is Interferon-induced transmembrane protein 3 (137 aa).

Residues 1-57 (MNHTSQAFVNAATGGQPPNYERIKEEYEVSELGAPHGSASVRTTVINMPREVSVPDH) lie on the Cytoplasmic side of the membrane. Tyr20 carries the post-translational modification Phosphotyrosine. Lys24 is covalently cross-linked (Glycyl lysine isopeptide (Lys-Gly) (interchain with G-Cter in ubiquitin)). Tyr27 bears the Phosphotyrosine mark. The segment at residues 58 to 78 (VVWSLFNTLFMNFCCLGFIAY) is an intramembrane region (helical). Residues 60-93 (WSLFNTLFMNFCCLGFIAYAYSVKSRDRKMVGDM) are interaction with SPP1. Residues Cys71 and Cys72 are each lipidated (S-palmitoyl cysteine). Topologically, residues 79–109 (AYSVKSRDRKMVGDMTGAQAYASTAKCLNIS) are cytoplasmic. Glycyl lysine isopeptide (Lys-Gly) (interchain with G-Cter in ubiquitin) cross-links involve residues Lys83, Lys88, and Lys104. Cys105 carries the S-palmitoyl cysteine lipid modification. An interaction with VAPA region spans residues 108–133 (ISSLVLSILMVIITIVTVVIIALNAP). The chain crosses the membrane as a helical span at residues 110-130 (SLVLSILMVIITIVTVVIIAL). At 131-137 (NAPRLQT) the chain is on the extracellular side.

This sequence belongs to the CD225/Dispanin family. As to quaternary structure, interacts with ATP6V0B. Interacts with CD81. Interacts with SPP1; the interaction reduces OPN expression. Interacts with BRI3. Polyubiquitinated with both 'Lys-48' and 'Lys-63' linkages. Ubiquitination negatively regulates antiviral activity. Lys-24 is the most prevalent ubiquitination site. Post-translationally, phosphorylation at Tyr-20 is required for endosomal and lysosomal location.

It is found in the cell membrane. Its subcellular location is the late endosome membrane. The protein resides in the early endosome membrane. The protein localises to the lysosome membrane. It localises to the cytoplasm. It is found in the perinuclear region. Functionally, IFN-induced antiviral protein which disrupts intracellular cholesterol homeostasis. Inhibits the entry of viruses to the host cell cytoplasm by preventing viral fusion with cholesterol depleted endosomes. May inactivate new enveloped viruses which buds out of the infected cell, by letting them go out with a cholesterol depleted membrane. Active against multiple viruses. Plays a critical role in the structural stability and function of vacuolar ATPase (v-ATPase). Establishes physical contact with the v-ATPase of endosomes which is critical for proper clathrin localization and is also required for the function of the v-ATPase to lower the pH in phagocytic endosomes thus establishing an antiviral state. This is Interferon-induced transmembrane protein 3 from Rattus norvegicus (Rat).